We begin with the raw amino-acid sequence, 236 residues long: TVP38/TMEM64 family membrane protein YdjX (236 aa).

Transmembrane regions (helical) follow at residues 7 to 27 (FLFA…FGLF), 50 to 70 (LYIL…ILVI), 72 to 92 (GGIV…ATLA), 156 to 176 (IAFW…IVIY), and 192 to 212 (FILQ…LAKL). Positions 73–183 (GIVFGPLLGT…VIYTVMASDL (111 aa)) are VTT domain.

Belongs to the TVP38/TMEM64 family.

Its subcellular location is the cell membrane. This is TVP38/TMEM64 family membrane protein YdjX (ydjX) from Escherichia coli (strain K12).